The primary structure comprises 452 residues: Bifunctional protein GlmU (452 aa).

Positions 1–226 (MSLDIVILAA…AMEVQGANDR (226 aa)) are pyrophosphorylase. UDP-N-acetyl-alpha-D-glucosamine is bound by residues 8–11 (LAAG), lysine 22, glutamine 73, 78–79 (GT), 99–101 (YGD), glycine 136, glutamate 151, asparagine 166, and asparagine 224. Residue aspartate 101 coordinates Mg(2+). A Mg(2+)-binding site is contributed by asparagine 224. Residues 227–247 (IQLAELERHYQLRAARRLMAQ) are linker. An N-acetyltransferase region spans residues 248–452 (GVTLRDPARF…IDGWQRPTKK (205 aa)). Positions 330 and 348 each coordinate UDP-N-acetyl-alpha-D-glucosamine. Histidine 360 (proton acceptor) is an active-site residue. UDP-N-acetyl-alpha-D-glucosamine contacts are provided by tyrosine 363 and asparagine 374. Acetyl-CoA-binding positions include alanine 377, 383–384 (NY), serine 402, alanine 420, and arginine 437.

It in the N-terminal section; belongs to the N-acetylglucosamine-1-phosphate uridyltransferase family. This sequence in the C-terminal section; belongs to the transferase hexapeptide repeat family. As to quaternary structure, homotrimer. Requires Mg(2+) as cofactor.

The protein localises to the cytoplasm. The catalysed reaction is alpha-D-glucosamine 1-phosphate + acetyl-CoA = N-acetyl-alpha-D-glucosamine 1-phosphate + CoA + H(+). It carries out the reaction N-acetyl-alpha-D-glucosamine 1-phosphate + UTP + H(+) = UDP-N-acetyl-alpha-D-glucosamine + diphosphate. It functions in the pathway nucleotide-sugar biosynthesis; UDP-N-acetyl-alpha-D-glucosamine biosynthesis; N-acetyl-alpha-D-glucosamine 1-phosphate from alpha-D-glucosamine 6-phosphate (route II): step 2/2. The protein operates within nucleotide-sugar biosynthesis; UDP-N-acetyl-alpha-D-glucosamine biosynthesis; UDP-N-acetyl-alpha-D-glucosamine from N-acetyl-alpha-D-glucosamine 1-phosphate: step 1/1. Its pathway is bacterial outer membrane biogenesis; LPS lipid A biosynthesis. Its function is as follows. Catalyzes the last two sequential reactions in the de novo biosynthetic pathway for UDP-N-acetylglucosamine (UDP-GlcNAc). The C-terminal domain catalyzes the transfer of acetyl group from acetyl coenzyme A to glucosamine-1-phosphate (GlcN-1-P) to produce N-acetylglucosamine-1-phosphate (GlcNAc-1-P), which is converted into UDP-GlcNAc by the transfer of uridine 5-monophosphate (from uridine 5-triphosphate), a reaction catalyzed by the N-terminal domain. This Stutzerimonas stutzeri (strain A1501) (Pseudomonas stutzeri) protein is Bifunctional protein GlmU.